Reading from the N-terminus, the 746-residue chain is Transcription factor pbcR (746 aa).

A compositionally biased stretch (polar residues) spans 1–12 (MYPWSSTGTSPF). The segment at 1 to 40 (MYPWSSTGTSPFSHPDNEGAESGDMSMGEEQQQPHQRRQK) is disordered. The zn(2)-C6 fungal-type DNA-binding region spans 47–76 (CQSCRASKVRCDQPNPGMPCLRCQKSGKPC). Residues 109–131 (ELQDSAGDGETAHSTALRSPSQL) are disordered. A compositionally biased stretch (polar residues) spans 120–131 (AHSTALRSPSQL).

It localises to the nucleus. Functionally, transcription factor; part of the gene cluster that mediates the biosynthesis of the diterpene ent-pimara-8(14),15-diene (PD). Acts as a positive regulator for the cluster gene. Down-regulates the expression of the penicillin gene cluster, two putative polyketide clusters, and one putative nonribosomal peptide cluster. The sequence is that of Transcription factor pbcR from Emericella nidulans (strain FGSC A4 / ATCC 38163 / CBS 112.46 / NRRL 194 / M139) (Aspergillus nidulans).